A 488-amino-acid chain; its full sequence is Metalloreductase STEAP3 (488 aa).

Residues 1–207 lie on the Cytoplasmic side of the membrane; it reads MSGEMDKPLI…AREVEAIPLR (207 aa). Phosphoserine is present on residues S11, S17, and S20. Residues 36-39, 58-59, 91-98, N116, and A151 each bind NADP(+); these read SGDF, SR, and VFREHYSS. FAD-binding residues include W152 and D160. Residues 208–228 form a helical membrane-spanning segment; sequence LLPSWKVPTLLALGLFVCFYA. A Fe(3+)-binding site is contributed by Y229. Over 229-258 the chain is Vesicular; the sequence is YNFIRDVLQPYIRKDENKFYKMPLSVVNTT. A glycan (N-linked (GlcNAc...) asparagine) is linked at N256. A helical membrane pass occupies residues 259 to 279; it reads LPCVAYVLLSLVYLPGVLAAA. In terms of domain architecture, Ferric oxidoreductase spans 259 to 407; sequence LPCVAYVLLS…LGFVALMLST (149 aa). Topologically, residues 280-304 are cytoplasmic; the sequence is LQLRRGTKYQRFPDWLDHWLQHRKQ. FAD-binding residues include Q281, R302, and K303. The chain crosses the membrane as a helical span at residues 305-325; that stretch reads IGLLSFFFAMLHALYSFCLPL. A heme b-binding site is contributed by H316. Y319 contributes to the Fe(3+) binding site. Topologically, residues 326 to 358 are vesicular; sequence RRSHRYDLVNLAVKQVLANKSRLWVEEEVWRME. Residues 359 to 379 traverse the membrane as a helical segment; it reads IYLSLGVLALGMLSLLAVTSI. S378 lines the FAD pocket. Over 380 to 390 the chain is Cytoplasmic; it reads PSIANSLNWKE. The helical transmembrane segment at 391-411 threads the bilayer; sequence FSFVQSTLGFVALMLSTMHTL. FAD is bound at residue Q395. A heme b-binding site is contributed by H409. Residues 412–433 lie on the Vesicular side of the membrane; it reads TYGWTRAFEENHYKFYLPPTFT. A helical membrane pass occupies residues 434–454; the sequence is LTLLLPCVIILAKGLFLLPCL. The Cytoplasmic segment spans residues 455–488; sequence SHRLTKIRRGWERDGAVKFMLPAGHTQGEKTSHV. At S486 the chain carries Phosphoserine.

It belongs to the STEAP family. Homodimer. Interacts with BNIP3L, MYT1, RHBDL4/RHBDD1 and TCTP. FAD is required as a cofactor. The cofactor is heme b. In terms of processing, proteolytically cleaved by RHBDL4/RHBDD1. RHBDL4/RHBDD1-induced cleavage occurs at multiple sites in a glycosylation-independent manner. Glycosylated.

It localises to the endosome membrane. The catalysed reaction is 2 Fe(2+) + NADP(+) + H(+) = 2 Fe(3+) + NADPH. The enzyme catalyses 2 Cu(+) + NADP(+) + H(+) = 2 Cu(2+) + NADPH. Its function is as follows. Integral membrane protein that functions as a NADPH-dependent ferric-chelate reductase, using NADPH from one side of the membrane to reduce a Fe(3+) chelate that is bound on the other side of the membrane. Mediates sequential transmembrane electron transfer from NADPH to FAD and onto heme, and finally to the Fe(3+) chelate. Can also reduce Cu(2+) to Cu(1+). Mediates efficient transferrin-dependent iron uptake in erythroid cells. May play a role downstream of p53/TP53 to interface apoptosis and cell cycle progression. Indirectly involved in exosome secretion by facilitating the secretion of proteins such as TCTP. The polypeptide is Metalloreductase STEAP3 (Steap3) (Rattus norvegicus (Rat)).